The following is an 86-amino-acid chain: Small ribosomal subunit protein uS17 (86 aa).

This sequence belongs to the universal ribosomal protein uS17 family. In terms of assembly, part of the 30S ribosomal subunit.

Functionally, one of the primary rRNA binding proteins, it binds specifically to the 5'-end of 16S ribosomal RNA. The sequence is that of Small ribosomal subunit protein uS17 from Roseiflexus castenholzii (strain DSM 13941 / HLO8).